A 320-amino-acid chain; its full sequence is Ferrochelatase (320 aa).

The Fe cation site is built by histidine 194 and glutamate 275.

Belongs to the ferrochelatase family. Monomer.

Its subcellular location is the cytoplasm. It carries out the reaction heme b + 2 H(+) = protoporphyrin IX + Fe(2+). The protein operates within porphyrin-containing compound metabolism; protoheme biosynthesis; protoheme from protoporphyrin-IX: step 1/1. Catalyzes the ferrous insertion into protoporphyrin IX. The protein is Ferrochelatase of Shigella flexneri serotype 5b (strain 8401).